The primary structure comprises 483 residues: Glutamyl-tRNA(Gln) amidotransferase subunit A (483 aa).

Active-site charge relay system residues include Lys76 and Ser151. The Acyl-ester intermediate role is filled by Ser175.

The protein belongs to the amidase family. GatA subfamily. In terms of assembly, heterotrimer of A, B and C subunits.

The enzyme catalyses L-glutamyl-tRNA(Gln) + L-glutamine + ATP + H2O = L-glutaminyl-tRNA(Gln) + L-glutamate + ADP + phosphate + H(+). Functionally, allows the formation of correctly charged Gln-tRNA(Gln) through the transamidation of misacylated Glu-tRNA(Gln) in organisms which lack glutaminyl-tRNA synthetase. The reaction takes place in the presence of glutamine and ATP through an activated gamma-phospho-Glu-tRNA(Gln). In Pseudomonas putida (strain ATCC 700007 / DSM 6899 / JCM 31910 / BCRC 17059 / LMG 24140 / F1), this protein is Glutamyl-tRNA(Gln) amidotransferase subunit A.